A 306-amino-acid chain; its full sequence is Ribonuclease H2 subunit B (306 aa).

The tract at residues 232–285 (LPDLSSPTPEPPVKKRRVSDAPVEADEDYTKYNSDNKSRKSNSKMTAAQKSLAK) is disordered. Positions 259-269 (DYTKYNSDNKS) are enriched in basic and acidic residues.

It belongs to the RNase H2 subunit B family. As to quaternary structure, the RNase H2 complex is a heterotrimer composed of the catalytic subunit RNASEH2A and the non-catalytic subunits RNASEH2B and RNASEH2C.

The protein resides in the nucleus. Its function is as follows. Non catalytic subunit of RNase H2, an endonuclease that specifically degrades the RNA of RNA:DNA hybrids. Participates in DNA replication, possibly by mediating the removal of lagging-strand Okazaki fragment RNA primers during DNA replication. Mediates the excision of single ribonucleotides from DNA:RNA duplexes. The chain is Ribonuclease H2 subunit B (rnaseh2b) from Xenopus laevis (African clawed frog).